The primary structure comprises 399 residues: Elongation factor Tu (399 aa).

The region spanning 10–209 is the tr-type G domain; it reads KPHVNIGTIG…AVDEYIPTPE (200 aa). A G1 region spans residues 19–26; that stretch reads GHVDHGKT. 19-26 is a GTP binding site; that stretch reads GHVDHGKT. Thr-26 serves as a coordination point for Mg(2+). A G2 region spans residues 60 to 64; it reads GITIN. The interval 81–84 is G3; sequence DCPG. GTP is bound by residues 81-85 and 136-139; these read DCPGH and NKMD. The interval 136-139 is G4; that stretch reads NKMD. Residues 174-176 form a G5 region; sequence SAL.

It belongs to the TRAFAC class translation factor GTPase superfamily. Classic translation factor GTPase family. EF-Tu/EF-1A subfamily. As to quaternary structure, monomer.

The protein localises to the cytoplasm. It catalyses the reaction GTP + H2O = GDP + phosphate + H(+). Functionally, GTP hydrolase that promotes the GTP-dependent binding of aminoacyl-tRNA to the A-site of ribosomes during protein biosynthesis. The chain is Elongation factor Tu from Nautilia profundicola (strain ATCC BAA-1463 / DSM 18972 / AmH).